Here is a 513-residue protein sequence, read N- to C-terminus: Sterol 14-alpha demethylase (513 aa).

Residues 10–30 (FTLVSAYAAAGLLAIIVLNLL) traverse the membrane as a helical segment. N-linked (GlcNAc...) asparagine glycosylation is found at N37 and N406. C453 is a binding site for heme.

It belongs to the cytochrome P450 family. The cofactor is heme.

The protein resides in the endoplasmic reticulum membrane. It catalyses the reaction a 14alpha-methyl steroid + 3 reduced [NADPH--hemoprotein reductase] + 3 O2 = a Delta(14) steroid + formate + 3 oxidized [NADPH--hemoprotein reductase] + 4 H2O + 4 H(+). The enzyme catalyses a 14alpha-methyl steroid + reduced [NADPH--hemoprotein reductase] + O2 = a 14alpha-hydroxymethyl steroid + oxidized [NADPH--hemoprotein reductase] + H2O + H(+). It carries out the reaction a 14alpha-hydroxymethyl steroid + reduced [NADPH--hemoprotein reductase] + O2 = a 14alpha-formyl steroid + oxidized [NADPH--hemoprotein reductase] + 2 H2O + H(+). The catalysed reaction is a 14alpha-formyl steroid + reduced [NADPH--hemoprotein reductase] + O2 = a Delta(14) steroid + formate + oxidized [NADPH--hemoprotein reductase] + H2O + 2 H(+). It catalyses the reaction lanosterol + 3 reduced [NADPH--hemoprotein reductase] + 3 O2 = 4,4-dimethyl-5alpha-cholesta-8,14,24-trien-3beta-ol + formate + 3 oxidized [NADPH--hemoprotein reductase] + 4 H2O + 4 H(+). The enzyme catalyses lanosterol + reduced [NADPH--hemoprotein reductase] + O2 = 32-hydroxylanosterol + oxidized [NADPH--hemoprotein reductase] + H2O + H(+). It carries out the reaction 32-hydroxylanosterol + reduced [NADPH--hemoprotein reductase] + O2 = 32-oxolanosterol + oxidized [NADPH--hemoprotein reductase] + 2 H2O + H(+). The catalysed reaction is 32-oxolanosterol + reduced [NADPH--hemoprotein reductase] + O2 = 4,4-dimethyl-5alpha-cholesta-8,14,24-trien-3beta-ol + formate + oxidized [NADPH--hemoprotein reductase] + H2O + 2 H(+). It catalyses the reaction eburicol + 3 reduced [NADPH--hemoprotein reductase] + 3 O2 = 14-demethyleburicol + formate + 3 oxidized [NADPH--hemoprotein reductase] + 4 H2O + 4 H(+). The enzyme catalyses eburicol + reduced [NADPH--hemoprotein reductase] + O2 = 32-hydroxyeburicol + oxidized [NADPH--hemoprotein reductase] + H2O + H(+). It carries out the reaction 32-hydroxyeburicol + reduced [NADPH--hemoprotein reductase] + O2 = 32-oxoeburicol + oxidized [NADPH--hemoprotein reductase] + 2 H2O + H(+). The catalysed reaction is 32-oxoeburicol + reduced [NADPH--hemoprotein reductase] + O2 = 14-demethyleburicol + formate + oxidized [NADPH--hemoprotein reductase] + H2O + 2 H(+). The protein operates within steroid biosynthesis; sterol biosynthesis. In terms of biological role, sterol 14alpha-demethylase, encoded by cyp51A, cyp51B and cyp51C, that plays a critical role in the third module of ergosterol biosynthesis pathway, being ergosterol the major sterol component in fungal membranes that participates in a variety of functions. The third module or late pathway involves the ergosterol synthesis itself through consecutive reactions that mainly occur in the endoplasmic reticulum (ER) membrane. In filamentous fungi, during the initial step of this module, lanosterol (lanosta-8,24-dien-3beta-ol) can be metabolized to eburicol. Sterol 14alpha-demethylase catalyzes the three-step oxidative removal of the 14alpha-methyl group (C-32) of both these sterols in the form of formate, and converts eburicol and lanosterol to 14-demethyleburicol (4,4,24-trimethylergosta-8,14,24(28)-trienol) and 4,4-dimethyl-5alpha-cholesta-8,14,24-trien-3beta-ol, respectively, which are further metabolized by other enzymes in the pathway to ergosterol. Can also use substrates not intrinsic to fungi, such as 24,25-dihydrolanosterol (DHL), producing 4,4'-dimethyl-8,14-cholestadien-3-beta-ol, but at lower rates than the endogenous substrates. Its function is as follows. As a target of azole drugs, plays a crucial role in azole susceptibility. This Aspergillus flavus (strain ATCC 200026 / FGSC A1120 / IAM 13836 / NRRL 3357 / JCM 12722 / SRRC 167) protein is Sterol 14-alpha demethylase.